Here is a 22-residue protein sequence, read N- to C-terminus: AEILFGDVRPPWMPPPIFPEMP.

It belongs to the frog skin active peptide (FSAP) family. Rothein subfamily. Expressed by the skin dorsal glands.

It is found in the secreted. Its function is as follows. Lacks antimicrobial activity. Does not inhibit the formation of NO by neuronal nitric oxide. This is Rothein 4.1 from Litoria rothii (Roth's tree frog).